A 525-amino-acid chain; its full sequence is Ribosomal protein S6 kinase beta-1 (525 aa).

The tract at residues 1–54 (MRRRRRRDGFYPAPDFRDREAEDMAGVFDIDLDQPEDAGSEDELEEGGQLNESM) is disordered. The TOS motif signature appears at 28–32 (FDIDL). The segment covering 30–46 (IDLDQPEDAGSEDELEE) has biased composition (acidic residues). One can recognise a Protein kinase domain in the interval 91 to 352 (FELLRVLGKG…AGEVQAHPFF (262 aa)). ATP contacts are provided by residues 97–105 (LGKGGYGKV) and K123. The Proton acceptor role is filled by D218. T252 is modified (phosphothreonine; by PDPK1). The AGC-kinase C-terminal domain occupies 353–423 (RHINWEELLA…VAPSVLESVK (71 aa)). Residues 380–399 (SQFDSKFTRQTPVDSPDDST) form a disordered region. Residues 381–399 (QFDSKFTRQTPVDSPDDST) are compositionally biased toward polar residues. Residue S394 is modified to Phosphoserine. A Phosphothreonine; by MTOR, NEK6 and NEK7 modification is found at T412. An autoinhibitory domain region spans residues 424–525 (EKFSFEPKIR…KRPEHLRMNL (102 aa)). A phosphoserine mark is found at S434 and S441. Residue T444 is modified to Phosphothreonine. S447 and S452 each carry phosphoserine. The segment at 486 to 509 (VTTSGEASAPLPIRQPNSGPYKKQ) is disordered. An N6-acetyllysine modification is found at K516.

It belongs to the protein kinase superfamily. AGC Ser/Thr protein kinase family. S6 kinase subfamily. As to quaternary structure, interacts with PPP1R9A/neurabin-1. Interacts with RPTOR. Interacts with IRS1. Interacts with EIF3B and EIF3C. Interacts with TRAF4. Interacts with POLDIP3. Interacts (via N-terminus) with IER5. Post-translationally, phosphorylation at Thr-412 is regulated by mTORC1. The phosphorylation at this site is maintained by an agonist-dependent autophosphorylation mechanism. Activated by phosphorylation at Thr-252 by PDPK1. Dephosphorylation by PPP1CC at Thr-412 in mitochondrion.

It localises to the cytoplasm. It is found in the synapse. Its subcellular location is the synaptosome. The protein localises to the mitochondrion outer membrane. The protein resides in the mitochondrion. It carries out the reaction L-seryl-[protein] + ATP = O-phospho-L-seryl-[protein] + ADP + H(+). The enzyme catalyses L-threonyl-[protein] + ATP = O-phospho-L-threonyl-[protein] + ADP + H(+). Activation requires multiple phosphorylation events on serine/threonine residues. Activation appears to be first mediated by phosphorylation of multiple sites in the autoinhibitory domain, which facilitates phosphorylation at Thr-412, disrupting the autoinhibitory mechanism and allowing phosphorylation of Thr-252 by PDPK1. The active conformation of the kinase is believed to be stabilized by a mechanism involving three conserved phosphorylation sites located in the kinase domain activation loop (Thr-252) and in the AGC-kinase C-terminal domain (Ser-394 in the middle of the tail/linker region and Thr-412 within a hydrophobic motif at its end). Activated by mTORC1; isoform Alpha I and isoform Alpha II are sensitive to rapamycin, which inhibits activating phosphorylation at Thr-412. Activated by PDPK1. Serine/threonine-protein kinase that acts downstream of mTOR signaling in response to growth factors and nutrients to promote cell proliferation, cell growth and cell cycle progression. Regulates protein synthesis through phosphorylation of EIF4B, RPS6 and EEF2K, and contributes to cell survival by repressing the pro-apoptotic function of BAD. Under conditions of nutrient depletion, the inactive form associates with the EIF3 translation initiation complex. Upon mitogenic stimulation, phosphorylation by the mechanistic target of rapamycin complex 1 (mTORC1) leads to dissociation from the EIF3 complex and activation. The active form then phosphorylates and activates several substrates in the pre-initiation complex, including the EIF2B complex and the cap-binding complex component EIF4B. Also controls translation initiation by phosphorylating a negative regulator of EIF4A, PDCD4, targeting it for ubiquitination and subsequent proteolysis. Promotes initiation of the pioneer round of protein synthesis by phosphorylating POLDIP3/SKAR. In response to IGF1, activates translation elongation by phosphorylating EEF2 kinase (EEF2K), which leads to its inhibition and thus activation of EEF2. Also plays a role in feedback regulation of mTORC2 by mTORC1 by phosphorylating MAPKAP1/SIN1, MTOR and RICTOR, resulting in the inhibition of mTORC2 and AKT1 signaling. Also involved in feedback regulation of mTORC1 and mTORC2 by phosphorylating DEPTOR. Mediates cell survival by phosphorylating the pro-apoptotic protein BAD and suppressing its pro-apoptotic function. Phosphorylates mitochondrial URI1 leading to dissociation of a URI1-PPP1CC complex. The free mitochondrial PPP1CC can then dephosphorylate RPS6KB1 at Thr-412, which is proposed to be a negative feedback mechanism for the RPS6KB1 anti-apoptotic function. Mediates TNF-alpha-induced insulin resistance by phosphorylating IRS1 at multiple serine residues, resulting in accelerated degradation of IRS1. In cells lacking functional TSC1-2 complex, constitutively phosphorylates and inhibits GSK3B. May be involved in cytoskeletal rearrangement through binding to neurabin. Phosphorylates and activates the pyrimidine biosynthesis enzyme CAD, downstream of MTOR. Following activation by mTORC1, phosphorylates EPRS and thereby plays a key role in fatty acid uptake by adipocytes and also most probably in interferon-gamma-induced translation inhibition. In Oryctolagus cuniculus (Rabbit), this protein is Ribosomal protein S6 kinase beta-1 (RPS6KB1).